Reading from the N-terminus, the 512-residue chain is MGCIKSKRKDNLNDDEVDSKTQPVRNTDRTIYVRDPTSNKQQRPVPEFHLLPGQRFQTKDPEEQGDIVVALYPYDGIHPDDLSFKKGEKMKVLEEHGEWWKAKSLSSKREGFIPSNYVAKVNTLETEEWFFKDITRKDAERQLLAPGNSAGAFLIRESETLKGSFSLSVRDYDPMHGDVIKHYKIRSLDNGGYYISPRITFPCISDMIKHYQKQSDGLCRRLEKACISPKPQKPWDKDAWEIPRESIKLVKKLGAGQFGEVWMGYYNNSTKVAVKTLKPGTMSVQAFLEEANLMKTLQHDKLVRLYAVVTKEEPIYIITEFMAKGSLLDFLKSDEGGKVLLPKLIDFSAQIAEGMAYIERKNYIHRDLRAANVLVSESLMCKIADFGLARVIEDNEYTAREGAKFPIKWTAPEAINFGCFTIKSDVWSFGILLYEIVTYGKIPYPGRTNADVMSALSQGYRMPRMENCPDELYDIMKMCWKEKAEERPTFDYLQSVLDDFYTATEGQYQQQP.

A disordered region spans residues 1-45 (MGCIKSKRKDNLNDDEVDSKTQPVRNTDRTIYVRDPTSNKQQRPV). Gly2 carries N-myristoyl glycine lipidation. Cys3 is lipidated: S-palmitoyl cysteine. Ser19 carries the phosphoserine modification. Residues 63 to 123 (EQGDIVVALY…PSNYVAKVNT (61 aa)) form the SH3 domain. The SH2 domain maps to 129–226 (WFFKDITRKD…GLCRRLEKAC (98 aa)). At Tyr193 the chain carries Phosphotyrosine. Ser228 bears the Phosphoserine mark. Residues 247-501 (IKLVKKLGAG…YLQSVLDDFY (255 aa)) form the Protein kinase domain. Residues 253–261 (LGAGQFGEV) and Lys275 contribute to the ATP site. Tyr306 and Tyr316 each carry phosphotyrosine. Asp367 acts as the Proton acceptor in catalysis. Tyr397 carries the phosphotyrosine; by autocatalysis modification. Phosphotyrosine is present on residues Tyr460 and Tyr473. Tyr508 is modified (phosphotyrosine; by autocatalysis, CSK and MATK).

The protein belongs to the protein kinase superfamily. Tyr protein kinase family. SRC subfamily. Interacts with TEC. Interacts (via SH2 domain) with FLT3 (tyrosine phosphorylated). Interacts with LIME1 and with CD79A upon activation of the B-cell antigen receptor. Interacts with the B-cell receptor complex. Interacts with phosphorylated THEMIS2. Interacts with EPOR. Interacts with MS4A2/FCER1B. Interaction (via the SH2 and SH3 domains) with MUC1 is stimulated by IL7 and the subsequent phosphorylation increases the binding between MUC1 and CTNNB1/beta-catenin. Interacts with ADAM15. Interacts with NDFIP2 and more weakly with NDFIP1. Interacts with FASLG. Interacts with KIT. Interacts with HCLS1. Interacts with FCGR2B. Interacts with FCGR1A; the interaction may be indirect. Interacts with CD19, CD22, CD79A and CD79B. Interacts (via SH3 domain) with CBLC, PPP1R15A and PDE4A. Interacts with TGFB1I1. Interacts (via SH3 domain) with PIK3R1, the regulatory subunit of phosphatidylinositol 3-kinase; this interaction enhances phosphatidylinositol 3-kinase activity. Interacts with CSF2RB, the common subunit of the IL3, IL5 and CSF2 receptors. Interacts with PAG1; identified in a complex with PAG1 and STAT3. Interacts with ABL1. Interacts with PTPN6/SHP-1. Interacts (via SH3 domain) with SCIMP (via proline-rich region). This interaction facilitates the phosphorylation of SCIMP on 'Tyr-96', which enhances binding of SCIMP to TLR4, and consequently the phosphorylation of TLR4 in response to stimulation by lipopolysaccharide in macrophages. Interacts with LPXN (via LD motif 3) and the interaction is induced upon B-cell antigen receptor (BCR) activation. Interacts (via SH3-domain) with ANKRD54 (via ankyrin repeat region) in an activation-independent status of LYN. Forms a multiprotein complex with ANKRD54 and HCLS1. Interacts (via SH2 and SH3 domains) with UNC119; leading to LYN activation. Interacts with CD36. Interacts with LYN. Interacts with SKAP1 and FYB1; this interaction promotes the phosphorylation of CLNK. Interacts with BCAR1/CAS and NEDD9/HEF1. In terms of processing, ubiquitinated by CBL, leading to its degradation. Autophosphorylated. Phosphorylated on tyrosine residues in response to KIT signaling. Phosphorylation at Tyr-397 is required for optimal activity. Phosphorylation at Tyr-508 inhibits kinase activity. Phosphorylated at Tyr-508 by CSK. Dephosphorylated by PTPRC/CD45. Becomes rapidly phosphorylated upon activation of the B-cell receptor and the immunoglobulin receptor FCGR1A. Phosphorylated in response to ITGB1 in B-cells. As to expression, detected in bone marrow-derived monocytes and macrophages (at protein level). Expressed predominantly in B-lymphoid and myeloid cells.

The protein resides in the cell membrane. It is found in the nucleus. The protein localises to the cytoplasm. It localises to the perinuclear region. Its subcellular location is the golgi apparatus. The protein resides in the membrane. It carries out the reaction L-tyrosyl-[protein] + ATP = O-phospho-L-tyrosyl-[protein] + ADP + H(+). Its activity is regulated as follows. Subject to autoinhibition, mediated by intramolecular interactions between the SH2 domain and the C-terminal phosphotyrosine. Phosphorylation at Tyr-397 is required for optimal activity. Phosphorylated by CSK at Tyr-508; phosphorylation at Tyr-508 inhibits kinase activity. Kinase activity is modulated by dephosphorylation by PTPRC/CD45. Inhibited by dasatinib, PP2, and SU6656. Non-receptor tyrosine-protein kinase that transmits signals from cell surface receptors and plays an important role in the regulation of innate and adaptive immune responses, hematopoiesis, responses to growth factors and cytokines, integrin signaling, but also responses to DNA damage and genotoxic agents. Functions primarily as negative regulator, but can also function as activator, depending on the context. Required for the initiation of the B-cell response, but also for its down-regulation and termination. Plays an important role in the regulation of B-cell differentiation, proliferation, survival and apoptosis, and is important for immune self-tolerance. Acts downstream of several immune receptors, including the B-cell receptor, CD79A, CD79B, CD5, CD19, CD22, FCER1, FCGR2, FCGR1A, TLR2 and TLR4. Plays a role in the inflammatory response to bacterial lipopolysaccharide. Mediates the responses to cytokines and growth factors in hematopoietic progenitors, platelets, erythrocytes, and in mature myeloid cells, such as dendritic cells, neutrophils and eosinophils. Acts downstream of EPOR, KIT, MPL, the chemokine receptor CXCR4, as well as the receptors for IL3, IL5 and CSF2. Plays an important role in integrin signaling. Regulates cell proliferation, survival, differentiation, migration, adhesion, degranulation, and cytokine release. Involved in the regulation of endothelial activation, neutrophil adhesion and transendothelial migration. Down-regulates signaling pathways by phosphorylation of immunoreceptor tyrosine-based inhibitory motifs (ITIM), that then serve as binding sites for phosphatases, such as PTPN6/SHP-1, PTPN11/SHP-2 and INPP5D/SHIP-1, that modulate signaling by dephosphorylation of kinases and their substrates. Phosphorylates LIME1 in response to CD22 activation. Phosphorylates BTK, CBL, CD5, CD19, CD72, CD79A, CD79B, CSF2RB, DOK1, HCLS1, MS4A2/FCER1B, SYK and TEC. Phosphorylates PIRB at Tyr-794 and Tyr-824, which is required for PIRB interaction with PTPN6/SHP-1 and PTPN11/SHP-2. Promotes phosphorylation of SIRPA, PTPN6/SHP-1, PTPN11/SHP-2 and INPP5D/SHIP-1. Required for rapid phosphorylation of FER in response to FCER1 activation. Mediates KIT phosphorylation. Acts as an effector of EPOR (erythropoietin receptor) in controlling KIT expression and may play a role in erythroid differentiation during the switch between proliferation and maturation. Depending on the context, activates or inhibits several signaling cascades. Regulates phosphatidylinositol 3-kinase activity and AKT1 activation. Regulates activation of the MAP kinase signaling cascade, including activation of MAP2K1/MEK1, MAPK1/ERK2, MAPK3/ERK1, MAPK8/JNK1 and MAPK9/JNK2. Mediates activation of STAT5A and/or STAT5B. Phosphorylates LPXN on 'Tyr-72'. Kinase activity facilitates TLR4-TLR6 heterodimerization and signal initiation. Phosphorylates SCIMP on 'Tyr-96'; this enhances binding of SCIMP to TLR4, promoting the phosphorylation of TLR4, and a selective cytokine response to lipopolysaccharide in macrophages. Phosphorylates CLNK. Phosphorylates BCAR1/CAS and NEDD9/HEF1. The sequence is that of Tyrosine-protein kinase Lyn (Lyn) from Mus musculus (Mouse).